The primary structure comprises 107 residues: Ribonuclease P protein component 4 (107 aa).

Residues C66, C69, C92, and C95 each contribute to the Zn(2+) site.

Belongs to the eukaryotic/archaeal RNase P protein component 4 family. Consists of a catalytic RNA component and at least 4-5 protein subunits. Requires Zn(2+) as cofactor.

The protein resides in the cytoplasm. It carries out the reaction Endonucleolytic cleavage of RNA, removing 5'-extranucleotides from tRNA precursor.. Its function is as follows. Part of ribonuclease P, a protein complex that generates mature tRNA molecules by cleaving their 5'-ends. This is Ribonuclease P protein component 4 from Methanosarcina mazei (strain ATCC BAA-159 / DSM 3647 / Goe1 / Go1 / JCM 11833 / OCM 88) (Methanosarcina frisia).